Here is a 533-residue protein sequence, read N- to C-terminus: Metal transporter nramp1 homolog (533 aa).

The tract at residues 1-33 (MTPRIESEESAPLVNKNNNNNNDNNNNNNVDEE) is disordered. The Cytoplasmic portion of the chain corresponds to 1 to 68 (MTPRIESEES…PNIDKPDSKW (68 aa)). The segment covering 14–29 (VNKNNNNNNDNNNNNN) has biased composition (low complexity). A helical transmembrane segment spans residues 69-89 (INFKTLWAFTGPGFLMSIAYL). Residues 90–101 (DPGNLESDIQAG) are Extracellular-facing. A helical membrane pass occupies residues 102–122 (AMAGYQLLWVLFWSTVIGFWL). Residues 123-158 (QMLASRLGVVTGKHLAEHCREQYPKTPRLLLWLMTE) are Cytoplasmic-facing. The chain crosses the membrane as a helical span at residues 159-179 (LAIIGSDIQEVIGTAIALQIL). The Extracellular segment spans residues 180-182 (SNG). A helical transmembrane segment spans residues 183 to 203 (HIPLWAGVLFTAADTFTFLFL). The Cytoplasmic portion of the chain corresponds to 204–212 (EKYGIRKLE). The helical transmembrane segment at 213–233 (AFFCSLIAIMAISFGVEYIIS) threads the bilayer. The Extracellular segment spans residues 234–256 (KPDQIEVVKGVFIPLCSQNNISQ). Asn-253 is a glycosylation site (N-linked (GlcNAc...) asparagine). A helical transmembrane segment spans residues 257–277 (AVGILGAVVMPHNIYLHSALV). Topologically, residues 278–302 (QSREIDRKSETQVKIANKYNRLESA) are cytoplasmic. A helical membrane pass occupies residues 303-323 (FALIISFIINLLLVSVFAKGF). The Extracellular portion of the chain corresponds to 324–348 (YGETTEIGLSSAADFLMDKYGKVAK). Residues 349 to 368 (YIWAIGLFSAGQCSTMTGTY) form a helical membrane-spanning segment. Topologically, residues 369-387 (SGQFVMEGFLKLKIAPWKR) are cytoplasmic. Residues 388-408 (LLITRCTAIVPAMVVAILSTS) traverse the membrane as a helical segment. Over 409-415 (HLDSLDQ) the chain is Extracellular. The helical transmembrane segment at 416-436 (WLNILQSIQLPFAVVPVLLFT) threads the bilayer. The Cytoplasmic portion of the chain corresponds to 437 to 457 (SSEKIMGSKFKNHWLNNQFVR). A helical membrane pass occupies residues 458–478 (FLSLLIIAINIYLIITFSMQI). Residues 479–481 (SES) are Extracellular-facing. The helical transmembrane segment at 482 to 502 (AWMISIVSISFFFYFIFIVYL) threads the bilayer. The Cytoplasmic segment spans residues 503 to 533 (SMGQENFNSMTKKIKNLFNNNSNQTYNNINY).

The protein belongs to the NRAMP family.

Its subcellular location is the membrane. Its function is as follows. Depletes iron from the phagolysosome in an ATP-dependent process. May rather act as a symporter of protons and metal cations in an ATP-dependent process. Nramp1 overexpression protected cells from L.pneumophila infection. The sequence is that of Metal transporter nramp1 homolog (nramp1) from Dictyostelium discoideum (Social amoeba).